The following is a 474-amino-acid chain: tRNA-2-methylthio-N(6)-dimethylallyladenosine synthase (474 aa).

The region spanning 3-120 is the MTTase N-terminal domain; the sequence is KKLHIKTWGC…LPEMLNHVQG (118 aa). [4Fe-4S] cluster is bound by residues Cys-12, Cys-49, Cys-83, Cys-157, Cys-161, and Cys-164. The Radical SAM core domain occupies 143-375; sequence RAEGPTAFVS…QDRINQQVLQ (233 aa). Residues 378-441 enclose the TRAM domain; sequence RRMLGTVQRI…TNSLRGTVVR (64 aa).

Belongs to the methylthiotransferase family. MiaB subfamily. Monomer. [4Fe-4S] cluster serves as cofactor.

The protein resides in the cytoplasm. The catalysed reaction is N(6)-dimethylallyladenosine(37) in tRNA + (sulfur carrier)-SH + AH2 + 2 S-adenosyl-L-methionine = 2-methylsulfanyl-N(6)-dimethylallyladenosine(37) in tRNA + (sulfur carrier)-H + 5'-deoxyadenosine + L-methionine + A + S-adenosyl-L-homocysteine + 2 H(+). Catalyzes the methylthiolation of N6-(dimethylallyl)adenosine (i(6)A), leading to the formation of 2-methylthio-N6-(dimethylallyl)adenosine (ms(2)i(6)A) at position 37 in tRNAs that read codons beginning with uridine. The chain is tRNA-2-methylthio-N(6)-dimethylallyladenosine synthase from Serratia proteamaculans (strain 568).